Consider the following 159-residue polypeptide: Cyclic pyranopterin monophosphate synthase (159 aa).

Residues 74-76 (MCH) and 112-113 (ME) contribute to the substrate site. Asp-127 is a catalytic residue.

Belongs to the MoaC family. As to quaternary structure, homohexamer; trimer of dimers.

It carries out the reaction (8S)-3',8-cyclo-7,8-dihydroguanosine 5'-triphosphate = cyclic pyranopterin phosphate + diphosphate. It participates in cofactor biosynthesis; molybdopterin biosynthesis. In terms of biological role, catalyzes the conversion of (8S)-3',8-cyclo-7,8-dihydroguanosine 5'-triphosphate to cyclic pyranopterin monophosphate (cPMP). This Helicobacter hepaticus (strain ATCC 51449 / 3B1) protein is Cyclic pyranopterin monophosphate synthase.